The chain runs to 252 residues: MKTVTVKDLVIGAGAPKIIVSLMAKDIARVKSEALAYRETDFDILEWRVDHFADLSNVESVMAAAKILRETMPEKPLLFTFRSAKEGGEQAISTEAYIALNRAAIDSGLVDMIDLELFTGDDQVKETVAYAHAHDVKVVMSNHDFHKTPEAEEIIARLRKMQSFDADIPKIALMPQSTSDVLTLLAATLEMQEQYADRPIITMSMAKTGVISRLAGEVFGSAATFGAVKKASAPGQISVNDLRTVLTILHQA.

Residues S21, 46 to 48 (EWR), and R82 contribute to the 3-dehydroquinate site. The active-site Proton donor/acceptor is H143. K170 (schiff-base intermediate with substrate) is an active-site residue. 3 residues coordinate 3-dehydroquinate: R213, S232, and Q236.

It belongs to the type-I 3-dehydroquinase family. In terms of assembly, homodimer.

The catalysed reaction is 3-dehydroquinate = 3-dehydroshikimate + H2O. It functions in the pathway metabolic intermediate biosynthesis; chorismate biosynthesis; chorismate from D-erythrose 4-phosphate and phosphoenolpyruvate: step 3/7. Its function is as follows. Involved in the third step of the chorismate pathway, which leads to the biosynthesis of aromatic amino acids. Catalyzes the cis-dehydration of 3-dehydroquinate (DHQ) and introduces the first double bond of the aromatic ring to yield 3-dehydroshikimate. This is 3-dehydroquinate dehydratase from Shigella dysenteriae serotype 1 (strain Sd197).